Consider the following 372-residue polypeptide: ATP phosphoribosyltransferase regulatory subunit (372 aa).

It belongs to the class-II aminoacyl-tRNA synthetase family. HisZ subfamily. In terms of assembly, heteromultimer composed of HisG and HisZ subunits.

Its subcellular location is the cytoplasm. It functions in the pathway amino-acid biosynthesis; L-histidine biosynthesis; L-histidine from 5-phospho-alpha-D-ribose 1-diphosphate: step 1/9. Functionally, required for the first step of histidine biosynthesis. May allow the feedback regulation of ATP phosphoribosyltransferase activity by histidine. The sequence is that of ATP phosphoribosyltransferase regulatory subunit from Allorhizobium ampelinum (strain ATCC BAA-846 / DSM 112012 / S4) (Agrobacterium vitis (strain S4)).